A 333-amino-acid chain; its full sequence is Global transcription regulator sge1 (333 aa).

2 disordered regions span residues 93–139 (PPGE…PSVP) and 241–307 (QHQS…PQYQ).

Belongs to the MIT1/WOR1 family.

It is found in the nucleus. Functionally, global transcriptional regulator that acts as an activator of secondary metabolism. Required for expression of a yet uncharacterized secondary metabolism gene cluster containing a non-canonical non-ribosomal peptide synthetase. Not required for conidiogenesis nor for pathogenicity, but is involved in vegetative growth. The polypeptide is Global transcription regulator sge1 (Gibberella fujikuroi (strain CBS 195.34 / IMI 58289 / NRRL A-6831) (Bakanae and foot rot disease fungus)).